Reading from the N-terminus, the 528-residue chain is MGKNLLKKERDPSILILDFGSQYSELIARRIREANVFSLVVSNFISTKEIQDINPQGIILSGGPNSVYEDNAPKCDQNIFNLGIPVLGICYGMQLMVKELGGTVTPANNRSEYGRAPIKIDFESDLLSSVKDKSIMWMSHGDSINHLPNGFIKIAHTENTLHAAISNKEKKLFGVQFHPEVIHSEYGMTVIKNFVYSISKCKADWNTETFLEETIPRIKEQVGDKKVLLALSGGVDSSTLAFLLNKAIGKQLTCMFIDQGFMRKGEPEFLMEFFAKKFHIKVEYINARERFLHKLNGVTDPEEKRKIIGGEFIRVFEEESHRLGPFEYLAQGTLYPDVIESAGTNLDPKTGERIAVKIKSHHNVGGLPKDLQFKLVEPLRKLFKDEVRKLGNALGLPDEIIKRHPFPGPGLAIRILGEVSIEKLNCLRDADWIVRDEIKKAGLYNDIWQAFAVLLPVKTVGVMGDKRTYAWPVVLRCVSSEDGMTADWSRIPYETLERISNRIVNEVAQVNRVVFDITSKPPGTIEWE.

The region spanning 13-204 is the Glutamine amidotransferase type-1 domain; that stretch reads SILILDFGSQ…VYSISKCKAD (192 aa). C90 serves as the catalytic Nucleophile. Active-site residues include H178 and E180. The region spanning 205–403 is the GMPS ATP-PPase domain; that stretch reads WNTETFLEET…LGLPDEIIKR (199 aa). Position 232–238 (232–238) interacts with ATP; it reads SGGVDSS.

In terms of assembly, homodimer.

The catalysed reaction is XMP + L-glutamine + ATP + H2O = GMP + L-glutamate + AMP + diphosphate + 2 H(+). Its pathway is purine metabolism; GMP biosynthesis; GMP from XMP (L-Gln route): step 1/1. In terms of biological role, catalyzes the synthesis of GMP from XMP. The sequence is that of GMP synthase [glutamine-hydrolyzing] from Prochlorococcus marinus (strain MIT 9515).